A 579-amino-acid chain; its full sequence is Matrix metalloproteinase-C (579 aa).

A signal peptide spans 1–17 (MRLIYVIAILLVSTCQA). Residues 18 to 129 (GFFSSLVSRF…SRCGVTDAPL (112 aa)) constitute a propeptide, activation peptide. The tract at residues 32–51 (NSSPSSSSSSSSFSNSRKPS) is disordered. Low complexity predominate over residues 33 to 50 (SSPSSSSSSSSFSNSRKP). Residues 120–127 (SRCGVTDA) carry the Cysteine switch motif. 5 residues coordinate Zn(2+): C122, H200, D202, H215, and H225. N-linked (GlcNAc...) asparagine glycosylation is present at N231. Zn(2+) is bound at residue H254. E255 is an active-site residue. Residues H258 and H264 each contribute to the Zn(2+) site. The segment at 307 to 394 (SGRSSSGSDF…SSSGSSGGGC (88 aa)) is disordered. Residues 315–324 (DFGGSSGGGS) show a composition bias toward gly residues. Over residues 325-341 (RTTARPTTTTRSWFGRF) the composition is skewed to low complexity. The segment covering 373 to 394 (WGSGSGSSGRGGSSSGSSGGGC) has biased composition (gly residues). Hemopexin repeat units lie at residues 395-437 (PSHI…FPSA) and 438-490 (PTPV…LGFS).

The protein belongs to the peptidase M10A family. The cofactor is Zn(2+).

The protein localises to the secreted. The protein resides in the extracellular space. It localises to the extracellular matrix. With respect to regulation, inhibited by human TIMP1 and TIMP2 and the broad MMP inhibitors BB94 (Batimastat) and CT543. Its function is as follows. Metalloproteinase. This is Matrix metalloproteinase-C from Caenorhabditis elegans.